The chain runs to 776 residues: Endonuclease MutS2 (776 aa).

330-337 (GPNTGGKT) contacts ATP. The region spanning 701–776 (LDLRGMRYEE…GSGATIAILK (76 aa)) is the Smr domain.

This sequence belongs to the DNA mismatch repair MutS family. MutS2 subfamily. In terms of assembly, homodimer. Binds to stalled ribosomes, contacting rRNA.

In terms of biological role, endonuclease that is involved in the suppression of homologous recombination and thus may have a key role in the control of bacterial genetic diversity. Its function is as follows. Acts as a ribosome collision sensor, splitting the ribosome into its 2 subunits. Detects stalled/collided 70S ribosomes which it binds and splits by an ATP-hydrolysis driven conformational change. Acts upstream of the ribosome quality control system (RQC), a ribosome-associated complex that mediates the extraction of incompletely synthesized nascent chains from stalled ribosomes and their subsequent degradation. Probably generates substrates for RQC. This is Endonuclease MutS2 from Lactococcus lactis subsp. cremoris (strain MG1363).